The sequence spans 306 residues: ATP synthase gamma chain (306 aa).

This sequence belongs to the ATPase gamma chain family. In terms of assembly, F-type ATPases have 2 components, CF(1) - the catalytic core - and CF(0) - the membrane proton channel. CF(1) has five subunits: alpha(3), beta(3), gamma(1), delta(1), epsilon(1). CF(0) has three main subunits: a, b and c.

The protein localises to the cell membrane. Functionally, produces ATP from ADP in the presence of a proton gradient across the membrane. The gamma chain is believed to be important in regulating ATPase activity and the flow of protons through the CF(0) complex. This is ATP synthase gamma chain from Bifidobacterium adolescentis (strain ATCC 15703 / DSM 20083 / NCTC 11814 / E194a).